Consider the following 187-residue polypeptide: Shikimate kinase (187 aa).

14 to 19 (GSGKST) contributes to the ATP binding site. Ser18 is a Mg(2+) binding site. The substrate site is built by Asp36, Arg60, and Gly82. Residue Arg120 coordinates ATP. Arg147 provides a ligand contact to substrate.

This sequence belongs to the shikimate kinase family. As to quaternary structure, monomer. Requires Mg(2+) as cofactor.

The protein resides in the cytoplasm. It catalyses the reaction shikimate + ATP = 3-phosphoshikimate + ADP + H(+). Its pathway is metabolic intermediate biosynthesis; chorismate biosynthesis; chorismate from D-erythrose 4-phosphate and phosphoenolpyruvate: step 5/7. In terms of biological role, catalyzes the specific phosphorylation of the 3-hydroxyl group of shikimic acid using ATP as a cosubstrate. This chain is Shikimate kinase, found in Chlorobaculum parvum (strain DSM 263 / NCIMB 8327) (Chlorobium vibrioforme subsp. thiosulfatophilum).